We begin with the raw amino-acid sequence, 475 residues long: Bifunctional protein HldE (475 aa).

Residues 1–318 (MMQYSPKFNN…ENAIHHREET (318 aa)) are ribokinase. 195-198 (NMSE) lines the ATP pocket. Asp264 is an active-site residue. The interval 344–475 (MTNGCFDILH…NVIKKIQASK (132 aa)) is cytidylyltransferase.

It in the N-terminal section; belongs to the carbohydrate kinase PfkB family. The protein in the C-terminal section; belongs to the cytidylyltransferase family. In terms of assembly, homodimer.

The catalysed reaction is D-glycero-beta-D-manno-heptose 7-phosphate + ATP = D-glycero-beta-D-manno-heptose 1,7-bisphosphate + ADP + H(+). It carries out the reaction D-glycero-beta-D-manno-heptose 1-phosphate + ATP + H(+) = ADP-D-glycero-beta-D-manno-heptose + diphosphate. Its pathway is nucleotide-sugar biosynthesis; ADP-L-glycero-beta-D-manno-heptose biosynthesis; ADP-L-glycero-beta-D-manno-heptose from D-glycero-beta-D-manno-heptose 7-phosphate: step 1/4. The protein operates within nucleotide-sugar biosynthesis; ADP-L-glycero-beta-D-manno-heptose biosynthesis; ADP-L-glycero-beta-D-manno-heptose from D-glycero-beta-D-manno-heptose 7-phosphate: step 3/4. Functionally, catalyzes the phosphorylation of D-glycero-D-manno-heptose 7-phosphate at the C-1 position to selectively form D-glycero-beta-D-manno-heptose-1,7-bisphosphate. In terms of biological role, catalyzes the ADP transfer from ATP to D-glycero-beta-D-manno-heptose 1-phosphate, yielding ADP-D-glycero-beta-D-manno-heptose. The chain is Bifunctional protein HldE from Actinobacillus pleuropneumoniae serotype 5b (strain L20).